Reading from the N-terminus, the 106-residue chain is UPF0145 protein Pput_2816 (106 aa).

It belongs to the UPF0145 family.

This is UPF0145 protein Pput_2816 from Pseudomonas putida (strain ATCC 700007 / DSM 6899 / JCM 31910 / BCRC 17059 / LMG 24140 / F1).